We begin with the raw amino-acid sequence, 205 residues long: Methylthioribulose-1-phosphate dehydratase (205 aa).

H94 and H96 together coordinate Zn(2+).

Belongs to the aldolase class II family. MtnB subfamily. Zn(2+) is required as a cofactor.

It catalyses the reaction 5-(methylsulfanyl)-D-ribulose 1-phosphate = 5-methylsulfanyl-2,3-dioxopentyl phosphate + H2O. Its pathway is amino-acid biosynthesis; L-methionine biosynthesis via salvage pathway; L-methionine from S-methyl-5-thio-alpha-D-ribose 1-phosphate: step 2/6. In terms of biological role, catalyzes the dehydration of methylthioribulose-1-phosphate (MTRu-1-P) into 2,3-diketo-5-methylthiopentyl-1-phosphate (DK-MTP-1-P). The sequence is that of Methylthioribulose-1-phosphate dehydratase from Pectobacterium atrosepticum (strain SCRI 1043 / ATCC BAA-672) (Erwinia carotovora subsp. atroseptica).